A 386-amino-acid chain; its full sequence is Probable zinc transporter zrg17 (386 aa).

Transmembrane regions (helical) follow at residues 102-122 (ILFFLVAVGVLLSGDATILLT), 128-148 (IVEGVLIIINVWRETLDSFLV), 163-183 (MELLVDFSFSILLIFLGMNLL), 208-228 (VHIHLTISLFASAIISGFALL), 243-263 (FFHGLTLVPSLILVLLLSLGY), and 268-288 (FLSHLLSLTIAVTALVNGFSI).

It belongs to the cation diffusion facilitator (CDF) transporter (TC 2.A.4) family. SLC30A subfamily. In terms of assembly, interacts with cis4.

It localises to the cytoplasm. The protein localises to the nucleus membrane. Probable transporter involved in the regulation of zinc homeostasis. The sequence is that of Probable zinc transporter zrg17 (zrg17) from Schizosaccharomyces pombe (strain 972 / ATCC 24843) (Fission yeast).